The chain runs to 87 residues: Putative defensin-like protein 169 (87 aa).

An N-terminal signal peptide occupies residues M1–G21. 4 disulfides stabilise this stretch: C36-C86, C48-C74, C53-C80, and C57-C82.

This sequence belongs to the DEFL family.

It localises to the secreted. In Arabidopsis thaliana (Mouse-ear cress), this protein is Putative defensin-like protein 169.